The chain runs to 465 residues: Flavin-containing monooxygenase FMO GS-OX-like 2 (465 aa).

18-23 contacts FAD; the sequence is GAGAAG. 217–222 is an NADP(+) binding site; sequence GSSASG.

Belongs to the FMO family. Requires FAD as cofactor.

Catalyzes the conversion of methylthioalkyl glucosinolates of any chain length into methylsulfinylalkyl glucosinolates. This is Flavin-containing monooxygenase FMO GS-OX-like 2 from Arabidopsis thaliana (Mouse-ear cress).